The chain runs to 142 residues: Putative pre-16S rRNA nuclease (142 aa).

The protein belongs to the YqgF nuclease family.

The protein localises to the cytoplasm. Its function is as follows. Could be a nuclease involved in processing of the 5'-end of pre-16S rRNA. The sequence is that of Putative pre-16S rRNA nuclease from Lactobacillus acidophilus (strain ATCC 700396 / NCK56 / N2 / NCFM).